The sequence spans 607 residues: UvrABC system protein C (607 aa).

Residues Asp-12–Ile-91 enclose the GIY-YIG domain. In terms of domain architecture, UVR spans Glu-200 to Ile-235.

The protein belongs to the UvrC family. As to quaternary structure, interacts with UvrB in an incision complex.

It is found in the cytoplasm. The UvrABC repair system catalyzes the recognition and processing of DNA lesions. UvrC both incises the 5' and 3' sides of the lesion. The N-terminal half is responsible for the 3' incision and the C-terminal half is responsible for the 5' incision. This chain is UvrABC system protein C, found in Carboxydothermus hydrogenoformans (strain ATCC BAA-161 / DSM 6008 / Z-2901).